Consider the following 1050-residue polypeptide: uncharacterized protein (1050 aa).

Residues 1–83 (MARLLTKSSQ…AVKLGTFEGC (83 aa)) are Cytoplasmic-facing. A phosphoserine mark is found at Ser-9 and Ser-60. Thr-64 carries the post-translational modification Phosphothreonine. A helical transmembrane segment spans residues 84–104 (FIPTTLNVLSILLYLRFPWII). The Extracellular portion of the chain corresponds to 105–112 (GEAGVLKT). The helical transmembrane segment at 113 to 133 (LLMLFISYAVGIFTSLSISAI) threads the bilayer. Topologically, residues 134–146 (CTNGMVRGGGAYY) are cytoplasmic. A helical membrane pass occupies residues 147–169 (AVSRSIGPELGGSIGLIFYVGQI). At 170–202 (LNTGMNISGFVEPIISIFGKESGTISQFLPEGY) the chain is on the extracellular side. Residue Asn-175 is glycosylated (N-linked (GlcNAc...) asparagine). The helical transmembrane segment at 203–223 (WWVFLYTTCVLAMCCILCCLG) threads the bilayer. The Cytoplasmic portion of the chain corresponds to 224 to 232 (SAIFAKASN). Residues 233-253 (ALFVVIILSTISIPISSIFVH) form a helical membrane-spanning segment. Over 254–295 (PFKDPSLLVHFTGLKWSTLMKNLASAYTENEKGTGYESFKST) the chain is Extracellular. Ser-270 is subject to Phosphoserine. The residue at position 271 (Thr-271) is a Phosphothreonine. The helical transmembrane segment at 296–316 (FGVFFPATAGLLAGASMSGDL) threads the bilayer. Residues 317 to 334 (KAPSRSIPKGTISSQATT) lie on the Cytoplasmic side of the membrane. A helical membrane pass occupies residues 335–355 (FLLYLLVILCVGASVTRTGLL). Over 356 to 368 (LDMDVMEHISLHP) the chain is Extracellular. A helical transmembrane segment spans residues 369–389 (LFIISGILSSGAFSSFMGIFG). Topologically, residues 390-417 (AAKLLQAIARDDLIPGMFFFAKGSSYDD) are cytoplasmic. The chain crosses the membrane as a helical span at residues 418–438 (IPYVAIGVTYLITQISLFWDI). The Extracellular portion of the chain corresponds to 439–442 (NMLS). The chain crosses the membrane as a helical span at residues 443 to 463 (SMITMTFLLTFGFINLSCFLL). Over 464–480 (RISSTPNFRPTFRYFNR) the chain is Cytoplasmic. Residues 481 to 497 (RTTLVGTILSFGVMFYV) form a helical membrane-spanning segment. Topologically, residues 498–499 (DR) are extracellular. The chain crosses the membrane as a helical span at residues 500-520 (LNAFISFLIAGILVVVIYFTC). Topologically, residues 521–1050 (PPKNWGDVSQ…SKSLTITTAL (530 aa)) are cytoplasmic. A Phosphoserine modification is found at Ser-901. The disordered stretch occupies residues 915-943 (ETESSFGNRSLSPKQENRRTYSDSTIESS). Positions 916–928 (TESSFGNRSLSPK) are enriched in polar residues. Ser-936 is modified (phosphoserine). Thr-939 carries the phosphothreonine modification.

The protein belongs to the SLC12A transporter family.

It localises to the membrane. This is an uncharacterized protein from Schizosaccharomyces pombe (strain 972 / ATCC 24843) (Fission yeast).